The primary structure comprises 38 residues: Alpha-conotoxin LvIC (38 aa).

A propeptide spanning residues 1 to 21 is cleaved from the precursor; that stretch reads SNGRNAAAGDKPSYWITLAIT. 2 cysteine pairs are disulfide-bonded: C23–C29 and C24–C34. Position 35 is a glutamine amide (Q35).

It belongs to the conotoxin A superfamily. The two analogs ([DelQ14]LvIC and [D1G,DelQ14]LvIC) are amidated at their N-terminal Cys. As to expression, expressed by the venom gland.

The protein localises to the secreted. Alpha-conotoxins bind to the nicotinic acetylcholine receptors (nAChR) and inhibit them. This synthetic peptide inhibits rat alpha-6/alpha-3-beta-4 nAChR (IC(50)=3.3 uM). This Conus lividus (Livid cone) protein is Alpha-conotoxin LvIC.